The chain runs to 187 residues: uncharacterized protein (187 aa).

Positions 127–172 (KQPQVTLTQLQEELDEAKTRLALKEKELLEALSEISKLRLQLSNQL) form a coiled coil.

This is an uncharacterized protein from Tomato torrado virus (isolate Solanum lycopersicum/Spain/PRIToTV0301/-) (ToTV).